A 252-amino-acid chain; its full sequence is Isoprenyl transferase (252 aa).

Asp-32 is a catalytic residue. Position 32 (Asp-32) interacts with Mg(2+). Residues 33–36, Trp-37, Arg-45, His-49, and 77–79 contribute to the substrate site; these read GNGR and STE. Asn-80 (proton acceptor) is an active-site residue. Substrate contacts are provided by residues Trp-81, Arg-83, Arg-200, and 206 to 208; that span reads RLS. Position 219 (Glu-219) interacts with Mg(2+).

This sequence belongs to the UPP synthase family. In terms of assembly, homodimer. The cofactor is Mg(2+).

Its function is as follows. Catalyzes the condensation of isopentenyl diphosphate (IPP) with allylic pyrophosphates generating different type of terpenoids. The protein is Isoprenyl transferase of Listeria monocytogenes serovar 1/2a (strain ATCC BAA-679 / EGD-e).